A 563-amino-acid chain; its full sequence is Kdo(2)-lipid A phosphoethanolamine 7''-transferase (563 aa).

Topologically, residues 1–9 (MRYIKSITQ) are cytoplasmic. Residues 10–30 (QKLSFLLAIYIGLFMNGAVFY) form a helical membrane-spanning segment. Over 31–48 (RRFGSYAHDFTVWKGISA) the chain is Periplasmic. A helical transmembrane segment spans residues 49 to 69 (VVELAATVLVTFFLLRLLSLF). Residues 70 to 79 (GRRSWRILAS) are Cytoplasmic-facing. The chain crosses the membrane as a helical span at residues 80 to 100 (LVVLFSAGASYYMTFLNVVIG). Residues 101-117 (YGIIASVMTTDIDLSKE) are Periplasmic-facing. A helical membrane pass occupies residues 118–138 (VVGLNFILWLIAVSALPLILI). The Cytoplasmic portion of the chain corresponds to 139-159 (WNNRCRYTLLRQLRTPGQRIR). A helical membrane pass occupies residues 160–180 (SLAVVVLAGIMVWAPIRLLDI). Residues 181 to 563 (QQKKVERATG…IPQAKEAAAN (383 aa)) lie on the Periplasmic side of the membrane.

The protein belongs to the phosphoethanolamine transferase family. EptB subfamily. Requires Ca(2+) as cofactor.

It localises to the cell inner membrane. The catalysed reaction is alpha-Kdo-(2-&gt;4)-alpha-Kdo-(2-&gt;6)-lipid A (E. coli) + a 1,2-diacyl-sn-glycero-3-phosphoethanolamine = 7-O-[2-aminoethoxy(hydroxy)phosphoryl]-alpha-Kdo-(2-&gt;4)-alpha-Kdo-(2-&gt;6)-lipid A + a 1,2-diacyl-sn-glycerol. The enzyme catalyses alpha-Kdo-(2-&gt;4)-alpha-Kdo-(2-&gt;6)-lipid IVA (E. coli) + a 1,2-diacyl-sn-glycero-3-phosphoethanolamine = 7-O-[2-aminoethoxy(hydroxy)phosphoryl]-alpha-Kdo-(2-&gt;4)-alpha-Kdo-(2-&gt;6)-lipid IVA (E. coli) + a 1,2-diacyl-sn-glycerol. Inhibited by calcium concentrations higher than 1 mM. Its function is as follows. Catalyzes the addition of a phosphoethanolamine (pEtN) moiety to the outer 3-deoxy-D-manno-octulosonic acid (Kdo) residue of a Kdo(2)-lipid A. Phosphatidylethanolamines with one unsaturated acyl group function as pEtN donors and the reaction releases diacylglycerol. This Escherichia coli (strain K12) protein is Kdo(2)-lipid A phosphoethanolamine 7''-transferase (eptB).